The sequence spans 192 residues: MLLIVGLGNPGIEYEKTRHNIGWWVLDLLRTKLTGLNLRLLCYSRVYELKHELKKEVDFIVYPLTYMNNSGKAVKCLYEPRMDLVVIHDDLDLTVGKTRVRFGGSSAGHKGVSSIIDALGTDSFWRVKVGIGRPFSKQEVINYVLGEPQKNEKEVLIRAADYIADQLCLLITDRNFSRFQQNINSFNSNENN.

A tRNA-binding site is contributed by tyrosine 14. Histidine 19 acts as the Proton acceptor in catalysis. TRNA is bound by residues tyrosine 66 and asparagine 68.

It belongs to the PTH family. In terms of assembly, monomer.

It is found in the cytoplasm. The enzyme catalyses an N-acyl-L-alpha-aminoacyl-tRNA + H2O = an N-acyl-L-amino acid + a tRNA + H(+). In terms of biological role, hydrolyzes ribosome-free peptidyl-tRNAs (with 1 or more amino acids incorporated), which drop off the ribosome during protein synthesis, or as a result of ribosome stalling. Catalyzes the release of premature peptidyl moieties from peptidyl-tRNA molecules trapped in stalled 50S ribosomal subunits, and thus maintains levels of free tRNAs and 50S ribosomes. In Coprothermobacter proteolyticus (strain ATCC 35245 / DSM 5265 / OCM 4 / BT), this protein is Peptidyl-tRNA hydrolase.